A 563-amino-acid polypeptide reads, in one-letter code: Membrane protein insertase YidC (563 aa).

The chain crosses the membrane as a helical span at residues 6 to 26 (TVLWMIFSFSLLLLWNNWQIH). The tract at residues 36–70 (PAPEAAATQQPKADANGTAASSTASIPSSPAAAPA) is disordered. Over residues 54 to 70 (AASSTASIPSSPAAAPA) the composition is skewed to low complexity. Helical transmembrane passes span 373–393 (WGWTIVALTVIIKAVFFPLAA), 443–463 (LPMVVQIPVFIALYWVLLASV), 482–502 (PFFILPAIMMATMFLQIKLNP), and 512–532 (VMMIMPLVFGGMMFFFPAGLV).

It belongs to the OXA1/ALB3/YidC family. Type 1 subfamily. In terms of assembly, interacts with the Sec translocase complex via SecD. Specifically interacts with transmembrane segments of nascent integral membrane proteins during membrane integration.

It is found in the cell membrane. In terms of biological role, required for the insertion and/or proper folding and/or complex formation of integral membrane proteins into the membrane. Involved in integration of membrane proteins that insert both dependently and independently of the Sec translocase complex, as well as at least some lipoproteins. Aids folding of multispanning membrane proteins. The polypeptide is Membrane protein insertase YidC (Bordetella bronchiseptica (strain ATCC BAA-588 / NCTC 13252 / RB50) (Alcaligenes bronchisepticus)).